Reading from the N-terminus, the 190-residue chain is Elongation factor P (190 aa).

Belongs to the elongation factor P family.

The protein localises to the cytoplasm. It participates in protein biosynthesis; polypeptide chain elongation. Involved in peptide bond synthesis. Stimulates efficient translation and peptide-bond synthesis on native or reconstituted 70S ribosomes in vitro. Probably functions indirectly by altering the affinity of the ribosome for aminoacyl-tRNA, thus increasing their reactivity as acceptors for peptidyl transferase. The chain is Elongation factor P from Pseudomonas fluorescens (strain SBW25).